The following is a 402-amino-acid chain: Acetylornithine aminotransferase (402 aa).

Pyridoxal 5'-phosphate is bound by residues 106–107 and Phe132; that span reads GA. Arg135 contacts N(2)-acetyl-L-ornithine. Position 217 to 220 (217 to 220) interacts with pyridoxal 5'-phosphate; that stretch reads DEVQ. An N6-(pyridoxal phosphate)lysine modification is found at Lys247. A N(2)-acetyl-L-ornithine-binding site is contributed by Thr275. Pyridoxal 5'-phosphate is bound at residue Thr276.

The protein belongs to the class-III pyridoxal-phosphate-dependent aminotransferase family. ArgD subfamily. Homodimer. Pyridoxal 5'-phosphate is required as a cofactor.

It is found in the cytoplasm. The enzyme catalyses N(2)-acetyl-L-ornithine + 2-oxoglutarate = N-acetyl-L-glutamate 5-semialdehyde + L-glutamate. It functions in the pathway amino-acid biosynthesis; L-arginine biosynthesis; N(2)-acetyl-L-ornithine from L-glutamate: step 4/4. This Streptomyces coelicolor (strain ATCC BAA-471 / A3(2) / M145) protein is Acetylornithine aminotransferase.